The chain runs to 245 residues: Orotidine 5'-phosphate decarboxylase (245 aa).

Residues Asp22, Lys44, 71-80 (DLKFHDIPNT), Thr131, Arg192, Gln201, Gly221, and Arg222 contribute to the substrate site. Lys73 functions as the Proton donor in the catalytic mechanism.

Belongs to the OMP decarboxylase family. Type 1 subfamily. Homodimer.

The catalysed reaction is orotidine 5'-phosphate + H(+) = UMP + CO2. Its pathway is pyrimidine metabolism; UMP biosynthesis via de novo pathway; UMP from orotate: step 2/2. Catalyzes the decarboxylation of orotidine 5'-monophosphate (OMP) to uridine 5'-monophosphate (UMP). The polypeptide is Orotidine 5'-phosphate decarboxylase (Escherichia coli (strain 55989 / EAEC)).